A 277-amino-acid polypeptide reads, in one-letter code: Uridine phosphorylase (277 aa).

Belongs to the PNP/UDP phosphorylase family.

It is found in the cytoplasm. It carries out the reaction uridine + phosphate = alpha-D-ribose 1-phosphate + uracil. It participates in pyrimidine metabolism; UMP biosynthesis via salvage pathway; uracil from uridine (phosphorylase route): step 1/1. Catalyzes the reversible phosphorylytic cleavage of uridine to uracil and ribose-1-phosphate. This is Uridine phosphorylase from Thermococcus kodakarensis (strain ATCC BAA-918 / JCM 12380 / KOD1) (Pyrococcus kodakaraensis (strain KOD1)).